Here is a 206-residue protein sequence, read N- to C-terminus: RNA-free ribonuclease P (206 aa).

The disordered stretch occupies residues 187–206 (NLAGDDPGHAPPCGPDQPAG). Residues 195–206 (HAPPCGPDQPAG) are compositionally biased toward pro residues.

The protein belongs to the HARP family.

It catalyses the reaction Endonucleolytic cleavage of RNA, removing 5'-extranucleotides from tRNA precursor.. RNA-free RNase P that catalyzes the removal of the 5'-leader sequence from pre-tRNA to produce the mature 5'-terminus. The polypeptide is RNA-free ribonuclease P (Halorhodospira halophila (strain DSM 244 / SL1) (Ectothiorhodospira halophila (strain DSM 244 / SL1))).